We begin with the raw amino-acid sequence, 870 residues long: Probable coatomer subunit gamma (870 aa).

HEAT repeat units lie at residues 60–97 (TEATEAFFGVTKLWQSKDVSLRRMVYLAVKELAEVSDD), 99–133 (IIVTSSLTKDMTGREDLYRAAAIRALCKITDTGML), 168–205 (EVVRRWANEVQEAVSSDNHMVQYHALALLYQIRANDRL), 278–315 (SEIQPAITALQMCCTSPKAAVRFAAVRTLNKVAMAHPN), 316–350 (AVMSCNVDLEKFITDPNRSIATLAITTLLKTGAES), and 389–425 (HTVMMPFLAKMLRSDGSYDYKKAIVETIIAIIEENPD).

The protein belongs to the COPG family. Oligomeric complex that consists of at least the alpha, beta, beta', gamma, delta, epsilon and zeta subunits.

It localises to the cytoplasm. The protein resides in the golgi apparatus membrane. Its subcellular location is the cytoplasmic vesicle. The protein localises to the COPI-coated vesicle membrane. The coatomer is a cytosolic protein complex that binds to dilysine motifs and reversibly associates with Golgi non-clathrin-coated vesicles, which further mediate biosynthetic protein transport from the ER, via the Golgi up to the trans Golgi network. Coatomer complex is required for budding from Golgi membranes, and is essential for the retrograde Golgi-to-ER transport of dilysine-tagged proteins. This is Probable coatomer subunit gamma from Caenorhabditis elegans.